Here is a 294-residue protein sequence, read N- to C-terminus: UDP-3-O-acyl-N-acetylglucosamine deacetylase (294 aa).

Zn(2+) contacts are provided by histidine 75, histidine 232, and aspartate 236. Histidine 259 acts as the Proton donor in catalysis.

It belongs to the LpxC family. Zn(2+) is required as a cofactor.

The enzyme catalyses a UDP-3-O-[(3R)-3-hydroxyacyl]-N-acetyl-alpha-D-glucosamine + H2O = a UDP-3-O-[(3R)-3-hydroxyacyl]-alpha-D-glucosamine + acetate. The protein operates within glycolipid biosynthesis; lipid IV(A) biosynthesis; lipid IV(A) from (3R)-3-hydroxytetradecanoyl-[acyl-carrier-protein] and UDP-N-acetyl-alpha-D-glucosamine: step 2/6. Its function is as follows. Catalyzes the hydrolysis of UDP-3-O-myristoyl-N-acetylglucosamine to form UDP-3-O-myristoylglucosamine and acetate, the committed step in lipid A biosynthesis. In Campylobacter jejuni subsp. doylei (strain ATCC BAA-1458 / RM4099 / 269.97), this protein is UDP-3-O-acyl-N-acetylglucosamine deacetylase.